Reading from the N-terminus, the 543-residue chain is MRHSLPYRMLRKRPMKLSTTVILMVSAVLFSVLLVVHLIYFSQISDMTRDGLANKALAVARTLADSPEIRQGLQKKPQESGIQAIAEAVRKRNDLLFIVVTDMHSLRYSHPEAQRIGQPFKGDDILKALNGEENVAINRGFLAQALRVFTPIYDENHKQIGVVAIGLELSRVTQQINDSRWSIIWSVLFGMLVGLIGTCILVNVLKKILFGLEPYEISTLFEQRQAMLQSIKEGVVAVDDRGEVTLINDAAQELLNYRKSQDDEKLSTLSHSWSQVVDVSEVLRDGTPRRDEEITIKDRLLLINTVPVRSNGVIIGAISTFRDKTEVRKLMQRLDGLVNYADALRERSHEFMNKLHVILGLLHLKSYKQLEDYILKTANNYQEEIGSLLGKIKSPVIAGFLISKINRATDLGHTLILNSESQLPDSGSEDQVATLITTLGNLIENALEALGPEPGGEISVTLHYRHGWLHCEVNDDGPGIAPDKIDHIFDKGVSTKGSERGVGLALVKQQVENLGGSIAVESEPGIFTQFFVQIPWDGERSNR.

Residues Met-1–Thr-20 are Cytoplasmic-facing. A helical membrane pass occupies residues Val-21–Phe-41. Topologically, residues Ser-42–Trp-181 are periplasmic. (R)-malate contacts are provided by residues Arg-107–His-110, Lys-121, Gly-140–Leu-142, and Arg-147. A helical membrane pass occupies residues Ser-182–Val-202. Over Asn-203–Arg-543 the chain is Cytoplasmic. Residues Leu-212–Asp-323 form the PAS domain. In terms of domain architecture, Histidine kinase spans Glu-346–Gly-538. His-349 carries the post-translational modification Phosphohistidine; by autocatalysis.

Homodimer. In terms of processing, autophosphorylated. The phosphoryl group is rapidly transferred to DcuR.

The protein resides in the cell inner membrane. It catalyses the reaction ATP + protein L-histidine = ADP + protein N-phospho-L-histidine.. Member of the two-component regulatory system DcuR/DcuS. Involved in the C4-dicarboxylate-stimulated regulation of the genes encoding the anaerobic fumarate respiratory system (frdABCD; nuoAN; dcuB; sdhCDAB; etc.). Weakly regulates the aerobic C4-dicarboxylate transporter dctA. Activates DcuR by phosphorylation. The protein is Sensor histidine kinase DcuS (dcuS) of Escherichia coli O6:H1 (strain CFT073 / ATCC 700928 / UPEC).